The chain runs to 118 residues: Small ribosomal subunit protein uS17 (118 aa).

It belongs to the universal ribosomal protein uS17 family. As to quaternary structure, part of the 30S ribosomal subunit.

Its function is as follows. One of the primary rRNA binding proteins, it binds specifically to the 5'-end of 16S ribosomal RNA. The protein is Small ribosomal subunit protein uS17 of Methanopyrus kandleri (strain AV19 / DSM 6324 / JCM 9639 / NBRC 100938).